A 370-amino-acid polypeptide reads, in one-letter code: Protein commissureless 1 (370 aa).

Topologically, residues 1 to 136 are extracellular; that stretch reads MISTTDYPTV…DADMHVIINY (136 aa). Residues 108-131 form a required for vesicular localization region; it reads LRDRSEESGESSWWSQIFGDADMH. A helical membrane pass occupies residues 137-157; it reads LWIGVVSSLVILSLVFILFSC. Residues 158-370 lie on the Cytoplasmic side of the membrane; the sequence is YFYRKFRTWK…CASLVVVVAA (213 aa). 2 short sequence motifs (PY-motif) span residues 220–223 and 229–232; these read PPCY and LPSY. The interaction with Nedd4 stretch occupies residues 227–237; the sequence is TGLPSYDEALH. Residues 287 to 312 form a disordered region; sequence VEEDKADSSSSTSASASPSSSESSNL. Residues 294–312 are compositionally biased toward low complexity; that stretch reads SSSSTSASASPSSSESSNL.

This sequence belongs to the commissureless family. As to quaternary structure, interacts (probably via PY-motifs) with Nedd4 (via WW2 domain). Interacts with Robo. Ubiquitinated by Nedd4; which promotes endocytosis of the comm/robo complex and comm proteasomal degradation. Not ubiquitinated by Nedd4.

The protein resides in the cytoplasmic vesicle membrane. Its subcellular location is the cell membrane. In terms of biological role, controls axon guidance across the CNS midline by preventing the delivery of Robo to the growth cone. In Drosophila melanogaster (Fruit fly), this protein is Protein commissureless 1.